A 533-amino-acid chain; its full sequence is Flavin-dependent halogenase armH4 (533 aa).

Residues G16, A19, and E49 each contribute to the FAD site. Chloride contacts are provided by S337 and G338. V339 lines the FAD pocket.

It belongs to the flavin-dependent halogenase family.

It carries out the reaction melleolide F + FADH2 + chloride + O2 = 6'-chloromelleolide F + FAD + 2 H2O + H(+). The catalysed reaction is melleolide F + bromide + FADH2 + O2 = 6'-bromomelleolide F + FAD + 2 H2O. Flavin-dependent halogenase involved in the biosynthesis of melleolides, a range of antifungal and phytotoxic polyketide derivatives composed of an orsellinic acid (OA) moiety esterified to various sesquiterpene alcohols. The halogenase catalyzes the transfer of a single chlorine atom to the melleolide backbone, resulting in a 6'-chloromelleolide product. The enzyme acts on free substrate and does not depend on carrier-protein-dependent acceptor molecules. Can also catalyze the transfer of a single bromine atom to the melleolide backbone in vitro. The sequence is that of Flavin-dependent halogenase armH4 from Armillaria mellea (Honey mushroom).